A 72-amino-acid chain; its full sequence is DNA-directed RNA polymerase subunit Rpo10 (72 aa).

The Zn(2+) site is built by Cys7, Cys10, Cys53, and Cys54.

The protein belongs to the archaeal Rpo10/eukaryotic RPB10 RNA polymerase subunit family. Part of the RNA polymerase complex. The cofactor is Zn(2+).

The protein resides in the cytoplasm. The catalysed reaction is RNA(n) + a ribonucleoside 5'-triphosphate = RNA(n+1) + diphosphate. DNA-dependent RNA polymerase (RNAP) catalyzes the transcription of DNA into RNA using the four ribonucleoside triphosphates as substrates. This is DNA-directed RNA polymerase subunit Rpo10 from Thermoplasma volcanium (strain ATCC 51530 / DSM 4299 / JCM 9571 / NBRC 15438 / GSS1).